An 81-amino-acid polypeptide reads, in one-letter code: uncharacterized protein (81 aa).

The signal sequence occupies residues 1 to 20 (MIDDHEALLLLVLSSGPAAL).

This is an uncharacterized protein from Treponema pallidum (strain Nichols).